The following is a 728-amino-acid chain: FYN-binding protein 2 (728 aa).

Disordered stretches follow at residues 17–76, 250–287, and 367–390; these read QNLD…PLQP, QAPEKQPDVRHHHLPKTKPLPSIDSLGPPPPKPSRPPI, and PGKNFPYPEPSAKHEDKKMKEKQP. Over residues 42 to 75 the composition is skewed to polar residues; that stretch reads GTQSTQILANGKPLSSNHKQRTPYCSSSESQPLQ. Positions 276–285 are enriched in pro residues; sequence GPPPPKPSRP. Basic and acidic residues predominate over residues 377–390; that stretch reads SAKHEDKKMKEKQP. A Phosphotyrosine modification is found at Y491. An SH2-binding; to LCP2 motif is present at residues 521–524; sequence YEDV. Y587 is subject to Phosphotyrosine. An SH3 domain is found at 664-724; that stretch reads IVINTAVACS…LIEHLDFKHQ (61 aa).

Interacts with SKAP1, LCK and FYN. The phosphorylated form interacts with LCP2. In terms of processing, phosphorylation is required for its function in T-cell activation. In terms of tissue distribution, expressed in T-cells (at protein level). Widely expressed.

The protein localises to the membrane raft. Functionally, adapter protein that plays a role in T-cell receptor (TCR)-mediated activation of signaling pathways. Required for T-cell activation and integrin-mediated T-cell adhesion in response to TCR stimulation. The sequence is that of FYN-binding protein 2 from Homo sapiens (Human).